The primary structure comprises 373 residues: Dual-specificity RNA methyltransferase RlmN (373 aa).

Residue glutamate 94 is the Proton acceptor of the active site. The 240-residue stretch at 100-339 (EDDRATLCVS…VIVRKTRGDD (240 aa)) folds into the Radical SAM core domain. A disulfide bridge connects residues cysteine 107 and cysteine 344. [4Fe-4S] cluster is bound by residues cysteine 114, cysteine 118, and cysteine 121. S-adenosyl-L-methionine is bound by residues 168 to 169 (GE), serine 200, 222 to 224 (SIH), and asparagine 301. Cysteine 344 (S-methylcysteine intermediate) is an active-site residue.

The protein belongs to the radical SAM superfamily. RlmN family. Requires [4Fe-4S] cluster as cofactor.

The protein localises to the cytoplasm. It carries out the reaction adenosine(2503) in 23S rRNA + 2 reduced [2Fe-2S]-[ferredoxin] + 2 S-adenosyl-L-methionine = 2-methyladenosine(2503) in 23S rRNA + 5'-deoxyadenosine + L-methionine + 2 oxidized [2Fe-2S]-[ferredoxin] + S-adenosyl-L-homocysteine. The catalysed reaction is adenosine(37) in tRNA + 2 reduced [2Fe-2S]-[ferredoxin] + 2 S-adenosyl-L-methionine = 2-methyladenosine(37) in tRNA + 5'-deoxyadenosine + L-methionine + 2 oxidized [2Fe-2S]-[ferredoxin] + S-adenosyl-L-homocysteine. Specifically methylates position 2 of adenine 2503 in 23S rRNA and position 2 of adenine 37 in tRNAs. m2A2503 modification seems to play a crucial role in the proofreading step occurring at the peptidyl transferase center and thus would serve to optimize ribosomal fidelity. In Shewanella sp. (strain W3-18-1), this protein is Dual-specificity RNA methyltransferase RlmN.